The sequence spans 418 residues: IQ domain-containing protein C (418 aa).

Residues 6–35 (FLRKVSTLQAGFRGFLVRRQFQSLRAEYEA) enclose the IQ domain. 5 disordered regions span residues 101–142 (QKKT…SVSK), 230–264 (HHAE…KGRE), 280–299 (SQAG…QPFK), 327–355 (AETQ…AGPC), and 376–418 (GSLD…LQWR). Composition is skewed to polar residues over residues 129–142 (KASQ…SVSK) and 249–259 (SVTSAGKTTAG). A coiled-coil region spans residues 141 to 176 (SKMENADLGLSQSQQELQEQRNHLAMELLWLQQAIN). The segment covering 390 to 404 (PPSAGSSGHGNTSEL) has biased composition (polar residues).

The protein is IQ domain-containing protein C (Iqcc) of Mus musculus (Mouse).